The following is a 306-amino-acid chain: Non-specific ribonucleoside hydrolase RihC (306 aa).

Residue H235 is part of the active site.

It belongs to the IUNH family. RihC subfamily.

In terms of biological role, hydrolyzes both purine and pyrimidine ribonucleosides with a broad-substrate specificity. In Salmonella typhi, this protein is Non-specific ribonucleoside hydrolase RihC.